Consider the following 169-residue polypeptide: Cell division inhibitor SulA (169 aa).

The ftsZ binding stretch occupies residues 106–112; the sequence is ALRTGNY. The interval 162-169 is lon protease binding; that stretch reads KIHSNLYH.

It belongs to the SulA family. Interacts with FtsZ. Is rapidly cleaved and degraded by the Lon protease once DNA damage is repaired.

In terms of biological role, component of the SOS system and an inhibitor of cell division. Accumulation of SulA causes rapid cessation of cell division and the appearance of long, non-septate filaments. In the presence of GTP, binds a polymerization-competent form of FtsZ in a 1:1 ratio, thus inhibiting FtsZ polymerization and therefore preventing it from participating in the assembly of the Z ring. This mechanism prevents the premature segregation of damaged DNA to daughter cells during cell division. This is Cell division inhibitor SulA from Shigella boydii serotype 4 (strain Sb227).